Reading from the N-terminus, the 210-residue chain is Proteasome subunit beta 2 (210 aa).

Residues 1–12 (MSNNVEEKILHG) constitute a propeptide, removed in mature form; by autocatalysis. The Nucleophile role is filled by threonine 13.

It belongs to the peptidase T1B family. In terms of assembly, the 20S proteasome core is composed of 14 alpha and 14 beta subunits that assemble into four stacked heptameric rings, resulting in a barrel-shaped structure. The two inner rings, each composed of seven catalytic beta subunits, are sandwiched by two outer rings, each composed of seven alpha subunits. The catalytic chamber with the active sites is on the inside of the barrel. Has a gated structure, the ends of the cylinder being occluded by the N-termini of the alpha-subunits. Is capped at one or both ends by the proteasome regulatory ATPase, PAN.

Its subcellular location is the cytoplasm. The enzyme catalyses Cleavage of peptide bonds with very broad specificity.. With respect to regulation, the formation of the proteasomal ATPase PAN-20S proteasome complex, via the docking of the C-termini of PAN into the intersubunit pockets in the alpha-rings, triggers opening of the gate for substrate entry. Interconversion between the open-gate and close-gate conformations leads to a dynamic regulation of the 20S proteasome proteolysis activity. In terms of biological role, component of the proteasome core, a large protease complex with broad specificity involved in protein degradation. The polypeptide is Proteasome subunit beta 2 (Nitrosopumilus maritimus (strain SCM1)).